The sequence spans 891 residues: Mating-type protein A-alpha Y1 (891 aa).

The homeobox DNA-binding region spans 146-205; sequence SKKPRPKFHSEYTPLLELYFRFNAYPTYADRRVLAEKTGMLTRQITVWFQNHRRRAKGPL. 5 disordered regions span residues 241-291, 319-339, 393-437, 610-718, and 800-822; these read PITL…PSTL, DIEMKDSSKPKRRKMKKLPKG, TRKP…RRVS, ARRK…EQSL, and MNWTASVGSNAQDPASQESGGDE. The span at 244-257 shows a compositional bias: polar residues; that stretch reads LGNNKTPDLTTSSR. A compositionally biased stretch (basic residues) spans 328 to 337; it reads PKRRKMKKLP. Over residues 427-437 the composition is skewed to low complexity; that stretch reads ASSTVPSRRVS. A compositionally biased stretch (basic residues) spans 627-638; the sequence is KKDKKERKKAGL. 2 stretches are compositionally biased toward low complexity: residues 651–667 and 676–710; these read VSSRASSLDSDVSTSAR and QPSSSSRASSVASSGRTPSLSSTSSRRSSGMSMPS. Residues 800–818 show a composition bias toward polar residues; that stretch reads MNWTASVGSNAQDPASQES.

Its subcellular location is the nucleus. Specifies A-alpha-1 mating-type. May regulate the expression of genes specific to the homokaryotic cell type. The sequence is that of Mating-type protein A-alpha Y1 from Schizophyllum commune (Split gill fungus).